Consider the following 1351-residue polypeptide: MFLIIFILPTTLAVIGDFNCTNSFINDYNKTIPRISEDVVDVSLGLGTYYVLNRVYLNTTLLFTGYFPKSGANFRDLALKGSIYLSTLWYKPPFLSDFNNGIFSKVKNTKLYVNNTLYSEFSTIVIGSVFVNTSYTIVVQPHNGILEITACQYTMCEYPHTVCKSKGSIRNESWHIDSSEPLCLFKKNFTYNVSADWLYFHFYQERGVFYAYYADVGMPTTFLFSLYLGTILSHYYVMPLTCNAISSNTDNETLEYWVTPLSRRQYLLNFDEHGVITNAVDCSSSFLSEIQCKTQSFAPNTGVYDLSGFTVKPVATVYRRIPNLPDCDIDNWLNNVSVPSPLNWERRIFSNCNFNLSTLLRLVHVDSFSCNNLDKSKIFGSCFNSITVDKFAIPNRRRDDLQLGSSGFLQSSNYKIDISSSSCQLYYSLPLVNVTINNFNPSSWNRRYGFGSFNLSSYDVVYSDHCFSVNSDFCPCADPSVVNSCAKSKPPSAICPAGTKYRHCDLDTTLYVKNWCRCSCLPDPISTYSPNTCPQKKVVVGIGEHCPGLGINEEKCGTQLNHSSCFCSPDAFLGWSFDSCISNNRCNIFSNFIFNGINSGTTCSNDLLYSNTEISTGVCVNYDLYGITGQGIFKEVSAAYYNNWQNLLYDSNGNIIGFKDFLTNKTYTILPCYSGRVSAAFYQNSSSPALLYRNLKCSYVLNNISFISQPFYFDSYLGCVLNAVNLTSYSVSSCDLRMGSGFCIDYALPSSRRKRRGISSPYRFVTFEPFNVSFVNDSVETVGGLFEIQIPTNFTIAGHEEFIQTSSPKVTIDCSAFVCSNYAACHDLLSEYGTFCDNINSILNEVNDLLDITQLQVANALMQGVTLSSNLNTNLHSDVDNIDFKSLLGCLGSQCGSSSRSLLEDLLFNKVKLSDVGFVEAYNNCTGGSEIRDLLCVQSFNGIKVLPPILSETQISGYTTAATVAAMFPPWSAAAGVPFSLNVQYRINGLGVTMDVLNKNQKLIANAFNKALLSIQNGFTATNSALAKIQSVVNANAQALNSLLQQLFNKFGAISSSLQEILSRLDNLEAQVQIDRLINGRLTALNAYVSQQLSDITLIKAGASRAIEKVNECVKSQSPRINFCGNGNHILSLVQNAPYGLLFIHFSYKPTSFKTVLVSPGLCLSGDRGIAPKQGYFIKQNDSWMFTGSSYYYPEPISDKNVVFMNSCSVNFTKAPFIYLNNSIPNLSDFEAELSLWFKNHTSIAPNLTFNSHINATFLDLYYEMNVIQESIKSLNSSFINLKEIGTYEMYVKWPWYIWLLIVILFIIFLMILFFICCCTGCGSACFSKCHNCCDEYGGHNDFVIKASHDD.

Residues 1–12 form the signal peptide; that stretch reads MFLIIFILPTTL. Residues 13-1295 lie on the Extracellular side of the membrane; that stretch reads AVIGDFNCTN…GTYEMYVKWP (1283 aa). The BetaCoV S1-NTD domain maps to 14–294; sequence VIGDFNCTNS…SFLSEIQCKT (281 aa). N-linked (GlcNAc...) asparagine; by host glycans are attached at residues asparagine 19, asparagine 29, asparagine 58, asparagine 114, asparagine 132, asparagine 171, asparagine 188, asparagine 192, and asparagine 251. Cystine bridges form between cysteine 20/cysteine 156, cysteine 151/cysteine 183, and cysteine 163/cysteine 242. 2 cysteine pairs are disulfide-bonded: cysteine 282–cysteine 292 and cysteine 327–cysteine 352. Residues 325 to 605 form the BetaCoV S1-CTD domain; the sequence is PDCDIDNWLN…GINSGTTCSN (281 aa). N-linked (GlcNAc...) asparagine; by host glycans are attached at residues asparagine 335 and asparagine 355. Cystine bridges form between cysteine 370/cysteine 423 and cysteine 382/cysteine 603. Residues asparagine 433, asparagine 454, asparagine 561, asparagine 664, asparagine 684, asparagine 703, asparagine 725, asparagine 771, asparagine 776, and asparagine 793 are each glycosylated (N-linked (GlcNAc...) asparagine; by host). Fusion peptide regions lie at residues 901 to 922 and 920 to 940; these read SLLE…VEAY and EAYN…VQSF. Asparagine 924 is a glycosylation site (N-linked (GlcNAc...) asparagine; by host). Residues cysteine 925 and cysteine 936 are joined by a disulfide bond. Residues 1001–1051 form a heptad repeat 1 region; it reads QKLIANAFNKALLSIQNGFTATNSALAKIQSVVNANAQALNSLLQQLFNKF. The stretch at 1030–1074 forms a coiled coil; that stretch reads QSVVNANAQALNSLLQQLFNKFGAISSSLQEILSRLDNLEAQVQI. N-linked (GlcNAc...) asparagine; by host glycans are attached at residues asparagine 1181, asparagine 1211, asparagine 1221, asparagine 1226, asparagine 1240, asparagine 1247, asparagine 1255, and asparagine 1276. Positions 1245 to 1284 are heptad repeat 2; sequence APNLTFNSHINATFLDLYYEMNVIQESIKSLNSSFINLKE. Residues 1257-1285 are a coiled coil; that stretch reads TFLDLYYEMNVIQESIKSLNSSFINLKEI. Residues 1296–1316 traverse the membrane as a helical segment; sequence WYIWLLIVILFIIFLMILFFI. The Cytoplasmic segment spans residues 1317–1351; it reads CCCTGCGSACFSKCHNCCDEYGGHNDFVIKASHDD. Positions 1347–1351 match the KxHxx motif; that stretch reads ASHDD.

The protein belongs to the betacoronaviruses spike protein family. Homotrimer; each monomer consists of a S1 and a S2 subunit. The resulting peplomers protrude from the virus surface as spikes. In terms of processing, specific enzymatic cleavages in vivo yield mature proteins. The precursor is processed into S1 and S2 by host cell furin or another cellular protease to yield the mature S1 and S2 proteins. Additionally, a second cleavage leads to the release of a fusion peptide after viral attachment to host cell receptor. Post-translationally, the cytoplasmic Cys-rich domain is palmitoylated. Spike glycoprotein is digested within host endosomes.

The protein resides in the virion membrane. The protein localises to the host endoplasmic reticulum-Golgi intermediate compartment membrane. It is found in the host cell membrane. In terms of biological role, attaches the virion to the cell membrane by interacting with host receptor, initiating the infection. Functionally, mediates fusion of the virion and cellular membranes by acting as a class I viral fusion protein. Under the current model, the protein has at least three conformational states: pre-fusion native state, pre-hairpin intermediate state, and post-fusion hairpin state. During viral and target cell membrane fusion, the coiled coil regions (heptad repeats) assume a trimer-of-hairpins structure, positioning the fusion peptide in close proximity to the C-terminal region of the ectodomain. The formation of this structure appears to drive apposition and subsequent fusion of viral and target cell membranes. Acts as a viral fusion peptide which is unmasked following S2 cleavage occurring upon virus endocytosis. The chain is Spike glycoprotein from Human coronavirus HKU1 (isolate N5) (HCoV-HKU1).